Consider the following 301-residue polypeptide: Probable alpha-L-glutamate ligase (301 aa).

Positions 104 to 287 (MQLLSRKGIG…VAGLIVDFIE (184 aa)) constitute an ATP-grasp domain. ATP is bound by residues lysine 141, 178 to 179 (EF), aspartate 187, and 211 to 213 (RSN). Mg(2+)-binding residues include aspartate 248, glutamate 260, and asparagine 262. Residues aspartate 248, glutamate 260, and asparagine 262 each contribute to the Mn(2+) site.

Belongs to the RimK family. Mg(2+) serves as cofactor. Mn(2+) is required as a cofactor.

This chain is Probable alpha-L-glutamate ligase, found in Aliivibrio salmonicida (strain LFI1238) (Vibrio salmonicida (strain LFI1238)).